Here is a 227-residue protein sequence, read N- to C-terminus: MDNVVDVDEEGNQQKLSANSTPYQTQECVLYGSIFVKNVPDLERRLAGLWIRAAKNSMSTKCRSALEPPVHQILRRRFRTEHQIQNYWQLKYIGVPEPDQKCPTIVRKEISSLVHSQDMMTYAKSLGLRMDYEYITQGKLWTKGNIKILHSTLTRTLRAGTYDSSSLKSMSDSALVEISISLPESAEYMPAAKSLRDFADQLMPLVNMEKIDYWKKMFSTPAAPARR.

It belongs to the Mediator complex subunit 18 family. As to quaternary structure, component of the Mediator complex.

It is found in the nucleus. In terms of biological role, component of the Mediator complex, a coactivator involved in the regulated transcription of nearly all RNA polymerase II-dependent genes. Mediator functions as a bridge to convey information from gene-specific regulatory proteins to the basal RNA polymerase II transcription machinery. Mediator is recruited to promoters by direct interactions with regulatory proteins and serves as a scaffold for the assembly of a functional preinitiation complex with RNA polymerase II and the general transcription factors. The protein is Mediator of RNA polymerase II transcription subunit 18 (mdt-18) of Caenorhabditis briggsae.